The sequence spans 308 residues: Glutaminase (308 aa).

Positions 66, 117, 161, 168, 192, 244, and 262 each coordinate substrate.

The protein belongs to the glutaminase family. In terms of assembly, homotetramer.

It carries out the reaction L-glutamine + H2O = L-glutamate + NH4(+). The protein is Glutaminase of Shigella dysenteriae serotype 1 (strain Sd197).